The primary structure comprises 252 residues: Imidazole glycerol phosphate synthase subunit HisF (252 aa).

Catalysis depends on residues Asp-11 and Asp-130.

The protein belongs to the HisA/HisF family. Heterodimer of HisH and HisF.

Its subcellular location is the cytoplasm. The catalysed reaction is 5-[(5-phospho-1-deoxy-D-ribulos-1-ylimino)methylamino]-1-(5-phospho-beta-D-ribosyl)imidazole-4-carboxamide + L-glutamine = D-erythro-1-(imidazol-4-yl)glycerol 3-phosphate + 5-amino-1-(5-phospho-beta-D-ribosyl)imidazole-4-carboxamide + L-glutamate + H(+). It participates in amino-acid biosynthesis; L-histidine biosynthesis; L-histidine from 5-phospho-alpha-D-ribose 1-diphosphate: step 5/9. Functionally, IGPS catalyzes the conversion of PRFAR and glutamine to IGP, AICAR and glutamate. The HisF subunit catalyzes the cyclization activity that produces IGP and AICAR from PRFAR using the ammonia provided by the HisH subunit. The sequence is that of Imidazole glycerol phosphate synthase subunit HisF from Anoxybacillus flavithermus (strain DSM 21510 / WK1).